The primary structure comprises 301 residues: Nodulation protein D 3 (301 aa).

Positions 6 to 63 (LDLNLLVVLDALLTARNLTAAASSINLSQPAMSAAVARLRNYFNDELFTMSGRERVLT) constitute an HTH lysR-type domain. The segment at residues 23 to 43 (LTAAASSINLSQPAMSAAVAR) is a DNA-binding region (H-T-H motif).

This sequence belongs to the LysR transcriptional regulatory family.

Its function is as follows. NodD regulates the expression of the nodABCFE genes which encode other nodulation proteins. NodD is also a negative regulator of its own expression. Binds flavonoids as inducers. The sequence is that of Nodulation protein D 3 (nodD3) from Mesorhizobium japonicum (strain LMG 29417 / CECT 9101 / MAFF 303099) (Mesorhizobium loti (strain MAFF 303099)).